Here is a 417-residue protein sequence, read N- to C-terminus: Bifunctional thiamine biosynthesis protein ThiDN (417 aa).

The segment at 1–235 (MVILAIGGYD…KSKFGYNSNP (235 aa)) is hydroxymethylpyrimidine/phosphomethylpyrimidine kinase. Glutamine 41 is a binding site for 4-amino-5-hydroxymethyl-2-methylpyrimidine. A thiamine-phosphate synthase region spans residues 236 to 417 (TYINKEKVIK…VIQKIYNTLM (182 aa)).

This sequence in the N-terminal section; belongs to the ThiD family. It in the C-terminal section; belongs to the ThiN family.

The enzyme catalyses 4-amino-5-hydroxymethyl-2-methylpyrimidine + ATP = 4-amino-2-methyl-5-(phosphooxymethyl)pyrimidine + ADP + H(+). The catalysed reaction is 4-amino-2-methyl-5-(phosphooxymethyl)pyrimidine + ATP = 4-amino-2-methyl-5-(diphosphooxymethyl)pyrimidine + ADP. It catalyses the reaction 2-[(2R,5Z)-2-carboxy-4-methylthiazol-5(2H)-ylidene]ethyl phosphate + 4-amino-2-methyl-5-(diphosphooxymethyl)pyrimidine + 2 H(+) = thiamine phosphate + CO2 + diphosphate. It carries out the reaction 2-(2-carboxy-4-methylthiazol-5-yl)ethyl phosphate + 4-amino-2-methyl-5-(diphosphooxymethyl)pyrimidine + 2 H(+) = thiamine phosphate + CO2 + diphosphate. The enzyme catalyses 4-methyl-5-(2-phosphooxyethyl)-thiazole + 4-amino-2-methyl-5-(diphosphooxymethyl)pyrimidine + H(+) = thiamine phosphate + diphosphate. It participates in cofactor biosynthesis; thiamine diphosphate biosynthesis; 4-amino-2-methyl-5-diphosphomethylpyrimidine from 5-amino-1-(5-phospho-D-ribosyl)imidazole. Its pathway is cofactor biosynthesis; thiamine diphosphate biosynthesis; thiamine phosphate from 4-amino-2-methyl-5-diphosphomethylpyrimidine and 4-methyl-5-(2-phosphoethyl)-thiazole: step 1/1. Catalyzes the phosphorylation of hydroxymethylpyrimidine phosphate (HMP-P) to HMP-PP, and of HMP to HMP-P. Its function is as follows. Condenses 4-methyl-5-(beta-hydroxyethyl)thiazole monophosphate (THZ-P) and 4-amino-5-hydroxymethyl pyrimidine pyrophosphate (HMP-PP) to form thiamine monophosphate (TMP). This Methanocaldococcus jannaschii (strain ATCC 43067 / DSM 2661 / JAL-1 / JCM 10045 / NBRC 100440) (Methanococcus jannaschii) protein is Bifunctional thiamine biosynthesis protein ThiDN (thiDN).